The chain runs to 207 residues: Large ribosomal subunit protein uL4 (207 aa).

The tract at residues 52–76 (KNTSLVSGGGKKPWKQKGTGRARQG) is disordered.

The protein belongs to the universal ribosomal protein uL4 family. As to quaternary structure, part of the 50S ribosomal subunit.

In terms of biological role, one of the primary rRNA binding proteins, this protein initially binds near the 5'-end of the 23S rRNA. It is important during the early stages of 50S assembly. It makes multiple contacts with different domains of the 23S rRNA in the assembled 50S subunit and ribosome. Forms part of the polypeptide exit tunnel. This Myxococcus xanthus (strain DK1622) protein is Large ribosomal subunit protein uL4.